The chain runs to 948 residues: Bifunctional glutamine synthetase adenylyltransferase/adenylyl-removing enzyme (948 aa).

The tract at residues 1-447 is adenylyl removase; it reads MLTPDNKLMS…EFQQVVGAES (447 aa). The interval 453–948 is adenylyl transferase; the sequence is EQGLQVLWQD…NCWNHLLEDD (496 aa).

The protein belongs to the GlnE family. Mg(2+) serves as cofactor.

The catalysed reaction is [glutamine synthetase]-O(4)-(5'-adenylyl)-L-tyrosine + phosphate = [glutamine synthetase]-L-tyrosine + ADP. The enzyme catalyses [glutamine synthetase]-L-tyrosine + ATP = [glutamine synthetase]-O(4)-(5'-adenylyl)-L-tyrosine + diphosphate. Involved in the regulation of glutamine synthetase GlnA, a key enzyme in the process to assimilate ammonia. When cellular nitrogen levels are high, the C-terminal adenylyl transferase (AT) inactivates GlnA by covalent transfer of an adenylyl group from ATP to specific tyrosine residue of GlnA, thus reducing its activity. Conversely, when nitrogen levels are low, the N-terminal adenylyl removase (AR) activates GlnA by removing the adenylyl group by phosphorolysis, increasing its activity. The regulatory region of GlnE binds the signal transduction protein PII (GlnB) which indicates the nitrogen status of the cell. This chain is Bifunctional glutamine synthetase adenylyltransferase/adenylyl-removing enzyme, found in Idiomarina loihiensis (strain ATCC BAA-735 / DSM 15497 / L2-TR).